The following is a 311-amino-acid chain: uncharacterized protein (311 aa).

The next 10 membrane-spanning stretches (helical) occupy residues 13–33 (STAV…GFFS), 41–61 (FELV…CWLA), 76–96 (LQTL…FKSF), 103–123 (IAIS…SFFY), 128–148 (NVIS…ISGI), 157–177 (LMGS…FTTL), 192–212 (FLQT…GAFA), 218–238 (NWIM…LLFF), 248–268 (FISI…TVFT), and 272–292 (PDLY…LTLV). EamA domains lie at 24–147 (VIFG…LISG) and 166–292 (VLAA…LTLV).

It belongs to the EamA transporter family.

The protein localises to the cell membrane. This is an uncharacterized protein from Bacillus subtilis (strain 168).